The following is a 317-amino-acid chain: 3'-5' exoribonuclease YhaM (317 aa).

The OB DNA-binding region spans 17-90; that stretch reads FLLIKESTRG…QLKILSIRLS (74 aa). The region spanning 163–279 is the HD domain; sequence HVVSMLAIGK…LHLIDLIDAK (117 aa).

Belongs to the YhaM family.

Functionally, shows a 3'-5' exoribonuclease activity. The sequence is that of 3'-5' exoribonuclease YhaM from Oceanobacillus iheyensis (strain DSM 14371 / CIP 107618 / JCM 11309 / KCTC 3954 / HTE831).